A 373-amino-acid polypeptide reads, in one-letter code: GDP-mannose 4,6-dehydratase (373 aa).

NADP(+)-binding positions include 10 to 15, 65 to 66, 87 to 91, and Tyr102; these read GITGQD, DL, and LGAQS. The active site involves Thr134. Residues Glu136 and Tyr158 each act as nucleophile in the active site. NADP(+) is bound by residues Lys162, His188, and Arg193.

This sequence belongs to the NAD(P)-dependent epimerase/dehydratase family. GDP-mannose 4,6-dehydratase subfamily. NADP(+) is required as a cofactor.

The catalysed reaction is GDP-alpha-D-mannose = GDP-4-dehydro-alpha-D-rhamnose + H2O. In terms of biological role, catalyzes the conversion of GDP-D-mannose to GDP-4-dehydro-6-deoxy-D-mannose. In Vibrio cholerae serotype O1 (strain ATCC 39315 / El Tor Inaba N16961), this protein is GDP-mannose 4,6-dehydratase.